Reading from the N-terminus, the 433-residue chain is MSQIVDIKAREVLDSRGNPTVEADVILADGSVGSACAPSGASTGSREALELRDGDKSRYLGKGVLKAVAAVNGPIRDALIGKDALAQAEIDHIMIDLDGTENKSTFGANAILAVSLAVAKAAAISKKVPLYAHIADINGTPGVYSMPVPMMNIINGGEHADNNVDIQEFMIQPVGAPNFREALRYGAEIFHALKKVLSDRGLSTAVGDEGGFAPDLSSNAEALAVIKEAVAAAGYELGKDITLAMDCAASEFYDKEANIYDLKGEGKKFTSEEFNFFLQDLTKQYPIVSIEDGLDESDWDGFAHQTKLMGDKIQLVGDDLFVTNTKILQRGIDNGIANSILIKFNQIGSLTETLAAIKMAKDAGFTAVISHRSGETEDATIADLAVGTAAGQIKTGSLCRSDRVAKYNQLLRIEEQLGGKAPYKGRSEIKGQA.

Glutamine 167 lines the (2R)-2-phosphoglycerate pocket. Catalysis depends on glutamate 209, which acts as the Proton donor. Residues aspartate 246, glutamate 291, and aspartate 318 each coordinate Mg(2+). The (2R)-2-phosphoglycerate site is built by lysine 343, arginine 372, serine 373, and lysine 394. Lysine 343 (proton acceptor) is an active-site residue.

This sequence belongs to the enolase family. As to quaternary structure, component of the RNA degradosome, a multiprotein complex involved in RNA processing and mRNA degradation. Requires Mg(2+) as cofactor.

Its subcellular location is the cytoplasm. The protein localises to the secreted. It is found in the cell surface. It carries out the reaction (2R)-2-phosphoglycerate = phosphoenolpyruvate + H2O. Its pathway is carbohydrate degradation; glycolysis; pyruvate from D-glyceraldehyde 3-phosphate: step 4/5. Its function is as follows. Catalyzes the reversible conversion of 2-phosphoglycerate (2-PG) into phosphoenolpyruvate (PEP). It is essential for the degradation of carbohydrates via glycolysis. This Marinomonas sp. (strain MWYL1) protein is Enolase.